A 318-amino-acid polypeptide reads, in one-letter code: Coproporphyrin III ferrochelatase (318 aa).

Fe(2+)-binding residues include histidine 186 and glutamate 268.

This sequence belongs to the ferrochelatase family.

It localises to the cytoplasm. The catalysed reaction is Fe-coproporphyrin III + 2 H(+) = coproporphyrin III + Fe(2+). The protein operates within porphyrin-containing compound metabolism; protoheme biosynthesis. Involved in coproporphyrin-dependent heme b biosynthesis. Catalyzes the insertion of ferrous iron into coproporphyrin III to form Fe-coproporphyrin III. The sequence is that of Coproporphyrin III ferrochelatase from Lactococcus lactis subsp. cremoris (strain SK11).